A 71-amino-acid chain; its full sequence is Protein translocase subunit SecE (71 aa).

The helical transmembrane segment at 43 to 63 (VAGAGILAVGAVGFIIYVLLT) threads the bilayer.

This sequence belongs to the SecE/SEC61-gamma family. Component of the Sec protein translocase complex. Heterotrimer consisting of SecY (alpha), SecG (beta) and SecE (gamma) subunits. The heterotrimers can form oligomers, although 1 heterotrimer is thought to be able to translocate proteins. Interacts with the ribosome. May interact with SecDF, and other proteins may be involved.

Its subcellular location is the cell membrane. In terms of biological role, essential subunit of the Sec protein translocation channel SecYEG. Clamps together the 2 halves of SecY. May contact the channel plug during translocation. The protein is Protein translocase subunit SecE of Methanosarcina mazei (strain ATCC BAA-159 / DSM 3647 / Goe1 / Go1 / JCM 11833 / OCM 88) (Methanosarcina frisia).